Consider the following 262-residue polypeptide: Small ribosomal subunit protein eS1 (262 aa).

A compositionally biased stretch (basic and acidic residues) spans 235–253 (HGDGKGSDEPGAKVSRPEA). The disordered stretch occupies residues 235–262 (HGDGKGSDEPGAKVSRPEAYEPPVQESV).

Belongs to the eukaryotic ribosomal protein eS1 family. Component of the small ribosomal subunit. Mature ribosomes consist of a small (40S) and a large (60S) subunit. The 40S subunit contains about 33 different proteins and 1 molecule of RNA (18S). The 60S subunit contains about 49 different proteins and 3 molecules of RNA (28S, 5.8S and 5S).

It localises to the cytoplasm. The sequence is that of Small ribosomal subunit protein eS1 from Triatoma infestans (Assassin bug).